Here is a 601-residue protein sequence, read N- to C-terminus: Aspartate--tRNA(Asp/Asn) ligase (601 aa).

E177 is an L-aspartate binding site. Residues 201-204 (QLFK) form an aspartate region. R223 serves as a coordination point for L-aspartate. Residues 223–225 (RDE) and Q232 contribute to the ATP site. Residue H455 participates in L-aspartate binding. E489 contacts ATP. R496 is a binding site for L-aspartate. An ATP-binding site is contributed by 541 to 544 (GWDR). The segment at 568-601 (VDPLTDAPAPIPLEQRRETGVDFKPKKKTDESAV) is disordered. Over residues 581–601 (EQRRETGVDFKPKKKTDESAV) the composition is skewed to basic and acidic residues.

The protein belongs to the class-II aminoacyl-tRNA synthetase family. Type 1 subfamily. In terms of assembly, homodimer.

It localises to the cytoplasm. It catalyses the reaction tRNA(Asx) + L-aspartate + ATP = L-aspartyl-tRNA(Asx) + AMP + diphosphate. Its function is as follows. Aspartyl-tRNA synthetase with relaxed tRNA specificity since it is able to aspartylate not only its cognate tRNA(Asp) but also tRNA(Asn). Reaction proceeds in two steps: L-aspartate is first activated by ATP to form Asp-AMP and then transferred to the acceptor end of tRNA(Asp/Asn). The chain is Aspartate--tRNA(Asp/Asn) ligase from Corynebacterium diphtheriae (strain ATCC 700971 / NCTC 13129 / Biotype gravis).